A 166-amino-acid polypeptide reads, in one-letter code: Peptidyl-prolyl cis-trans isomerase-like 1 (166 aa).

The PPIase cyclophilin-type domain occupies 10 to 164 (QPPNVYLETS…DDVKIIKAYP (155 aa)). Residues 54-65 (HRIIKDFMIQGG), 70-71 (TG), 99-104 (AMANAG), 109-113 (GSQFF), Thr-119, and Lys-125 contribute to the cyclosporin A site. Position 149 is a phosphoserine (Ser-149).

It belongs to the cyclophilin-type PPIase family. PPIL1 subfamily. Identified in the spliceosome C complex. Interacts with SNW1/SKIP. Interacts with CDC40/PRP17; this interaction leads to CDC40 isomerization. Interacts with RBM22.

It is found in the nucleus. It catalyses the reaction [protein]-peptidylproline (omega=180) = [protein]-peptidylproline (omega=0). Its activity is regulated as follows. Inhibited by Cyclosporin A. Functionally, involved in pre-mRNA splicing as component of the spliceosome. PPIases accelerate the folding of proteins. It catalyzes the cis-trans isomerization of proline imidic peptide bonds in oligopeptides. Catalyzes prolyl peptide bond isomerization in CDC40/PRP17. Plays an important role in embryonic brain development; this function is independent of its isomerase activity. The protein is Peptidyl-prolyl cis-trans isomerase-like 1 (PPIL1) of Bos taurus (Bovine).